The sequence spans 300 residues: LysM and putative peptidoglycan-binding domain-containing protein 3 (300 aa).

Residues 1–216 (MAGRNQNRTA…PYYGADWGMG (216 aa)) lie on the Extracellular side of the membrane. N7 and N26 each carry an N-linked (GlcNAc...) asparagine glycan. S55 carries the post-translational modification Phosphoserine. One can recognise a LysM domain in the interval 65–109 (LTKDIQEGDTLNAVALQYCCTVADIKRVNNLISDQDFFALRSIKI). Positions 136–157 (PYFQEQDTVPANDSPSSSESAG) are disordered. Positions 140–156 (EQDTVPANDSPSSSESA) are enriched in polar residues. An N-linked (GlcNAc...) asparagine glycan is attached at N199. Residues 217 to 237 (WWTAVVIMLIVGIITPVFYLL) traverse the membrane as a helical segment. At 238 to 300 (YYEILAKVDV…LYRQDPQARD (63 aa)) the chain is on the cytoplasmic side. The tract at residues 253-300 (VDSSHLHPGLTPPSHHREMGNAIGPTKGIPVGQQDDHRLYRQDPQARD) is disordered. Residues 286–300 (QDDHRLYRQDPQARD) are compositionally biased toward basic and acidic residues.

Its subcellular location is the cell membrane. The protein resides in the golgi apparatus. In terms of biological role, essential for Golgi structural integrity. The sequence is that of LysM and putative peptidoglycan-binding domain-containing protein 3 (Lysmd3) from Rattus norvegicus (Rat).